Here is a 257-residue protein sequence, read N- to C-terminus: Paired box protein 1 homolog (257 aa).

Residues 26-37 (TTPSSTSTTPSS) are compositionally biased toward low complexity. Residues 26-58 (TTPSSTSTTPSSDNGIQQYSSISTSSGYAPANS) form a disordered region. Positions 38 to 52 (DNGIQQYSSISTSSG) are enriched in polar residues. Positions 61–187 (KTAEVNQLGG…SSISRILRNK (127 aa)) form a DNA-binding region, paired. A PAI subdomain region spans residues 64 to 120 (EVNQLGGVFVNGRPLPFEMRCKIVELSRQGTRPCDISRQLKISHGCVSKILTRFSEN). Residues 139–187 (KVVEYIRSLKRSDPGIFAWEIRDRLISADICDRANLPSVSSISRILRNK) form an RED subdomain region.

Its subcellular location is the nucleus. Its function is as follows. Transcription factor. May play a role in pharyngeal cell differentiation. May have a protective role in response to infection by the Gram-negative bacterium Vibrio cholerae. This chain is Paired box protein 1 homolog, found in Caenorhabditis elegans.